Here is a 722-residue protein sequence, read N- to C-terminus: Zinc finger BED domain-containing protein RICESLEEPER 2 (722 aa).

The BED-type zinc-finger motif lies at 66–134 (RKKSLVWEHF…QEHKLALTPA (69 aa)). Residues cysteine 89, cysteine 92, histidine 113, and histidine 127 each coordinate Zn(2+). Positions 572-592 (VEQGDGNNAPASENGTQATAP) are disordered. The segment covering 576–592 (DGNNAPASENGTQATAP) has biased composition (polar residues). Positions 617–702 (ELEQYLDESL…EALVCAKDWL (86 aa)) are HATC (Hobo-Ac-Tam3) domain.

As to quaternary structure, homodimer.

The protein resides in the nucleus. In terms of biological role, transposase-like protein that is essential for plant growth and development. May regulate global gene expression by recruiting other cellular factors. The sequence is that of Zinc finger BED domain-containing protein RICESLEEPER 2 from Oryza sativa subsp. japonica (Rice).